The chain runs to 154 residues: D-aminoacyl-tRNA deacylase (154 aa).

Residues 142–143 (GP) carry the Gly-cisPro motif, important for rejection of L-amino acids motif.

The protein belongs to the DTD family. Homodimer.

It localises to the cytoplasm. It carries out the reaction glycyl-tRNA(Ala) + H2O = tRNA(Ala) + glycine + H(+). The catalysed reaction is a D-aminoacyl-tRNA + H2O = a tRNA + a D-alpha-amino acid + H(+). An aminoacyl-tRNA editing enzyme that deacylates mischarged D-aminoacyl-tRNAs. Also deacylates mischarged glycyl-tRNA(Ala), protecting cells against glycine mischarging by AlaRS. Acts via tRNA-based rather than protein-based catalysis; rejects L-amino acids rather than detecting D-amino acids in the active site. By recycling D-aminoacyl-tRNA to D-amino acids and free tRNA molecules, this enzyme counteracts the toxicity associated with the formation of D-aminoacyl-tRNA entities in vivo and helps enforce protein L-homochirality. The chain is D-aminoacyl-tRNA deacylase from Polaromonas sp. (strain JS666 / ATCC BAA-500).